The sequence spans 198 residues: Alpha-S1-casein (198 aa).

The first 15 residues, 1–15 (MKLLILTCLVASAVA), serve as a signal peptide directing secretion. Disordered stretches follow at residues 28-47 (QTQR…LKEE) and 71-97 (SEST…EQKH). 6 positions are modified to phosphoserine: Ser39, Ser80, Ser81, Ser83, Ser84, and Ser85.

This sequence belongs to the alpha-casein family. In terms of tissue distribution, mammary gland specific. Secreted in milk.

The protein localises to the secreted. Its function is as follows. Important role in the capacity of milk to transport calcium phosphate. This Cavia porcellus (Guinea pig) protein is Alpha-S1-casein (CSN1S1).